The chain runs to 206 residues: LexA repressor (206 aa).

A DNA-binding region (H-T-H motif) is located at residues Val-28 to Ala-48. Residues Ser-128 and Lys-166 each act as for autocatalytic cleavage activity in the active site.

It belongs to the peptidase S24 family. As to quaternary structure, homodimer.

It carries out the reaction Hydrolysis of Ala-|-Gly bond in repressor LexA.. Functionally, represses a number of genes involved in the response to DNA damage (SOS response), including recA and lexA. In the presence of single-stranded DNA, RecA interacts with LexA causing an autocatalytic cleavage which disrupts the DNA-binding part of LexA, leading to derepression of the SOS regulon and eventually DNA repair. The polypeptide is LexA repressor (Bacillus pumilus (strain SAFR-032)).